The primary structure comprises 97 residues: RNA-binding protein Hfq (97 aa).

The region spanning D10–V70 is the Sm domain.

Belongs to the Hfq family. In terms of assembly, homohexamer.

RNA chaperone that binds small regulatory RNA (sRNAs) and mRNAs to facilitate mRNA translational regulation in response to envelope stress, environmental stress and changes in metabolite concentrations. Also binds with high specificity to tRNAs. This Neisseria gonorrhoeae (strain ATCC 700825 / FA 1090) protein is RNA-binding protein Hfq.